The primary structure comprises 173 residues: Photosystem I assembly protein Ycf3 (173 aa).

3 TPR repeats span residues 35-68 (AFVY…EDDA), 72-105 (SYIL…NPNL), and 120-153 (GERA…APNN).

It belongs to the Ycf3 family.

The protein resides in the cellular thylakoid membrane. Essential for the assembly of the photosystem I (PSI) complex. May act as a chaperone-like factor to guide the assembly of the PSI subunits. The protein is Photosystem I assembly protein Ycf3 of Gloeothece citriformis (strain PCC 7424) (Cyanothece sp. (strain PCC 7424)).